We begin with the raw amino-acid sequence, 403 residues long: Argininosuccinate synthase (403 aa).

A10–S18 lines the ATP pocket. Position 87 (Y87) interacts with L-citrulline. G117 serves as a coordination point for ATP. 3 residues coordinate L-aspartate: T119, N123, and D124. L-citrulline is bound at residue N123. L-citrulline-binding residues include R127, S175, S184, E260, and Y272.

It belongs to the argininosuccinate synthase family. Type 1 subfamily. As to quaternary structure, homotetramer.

Its subcellular location is the cytoplasm. It carries out the reaction L-citrulline + L-aspartate + ATP = 2-(N(omega)-L-arginino)succinate + AMP + diphosphate + H(+). It functions in the pathway amino-acid biosynthesis; L-arginine biosynthesis; L-arginine from L-ornithine and carbamoyl phosphate: step 2/3. This Bacillus pumilus (strain SAFR-032) protein is Argininosuccinate synthase.